The chain runs to 402 residues: mRNA-capping enzyme subunit alpha (402 aa).

The active-site N6-GMP-lysine intermediate is Lys-66.

This sequence belongs to the eukaryotic GTase family. In terms of assembly, heterodimer. The mRNA-capping enzyme is composed of two separate chains alpha and beta, respectively a mRNA guanylyltransferase and an mRNA 5'-triphosphate monophosphatase.

The protein resides in the nucleus. It carries out the reaction a 5'-end diphospho-ribonucleoside in mRNA + GTP + H(+) = a 5'-end (5'-triphosphoguanosine)-ribonucleoside in mRNA + diphosphate. Functionally, second step of mRNA capping. Transfer of the GMP moiety of GTP to the 5'-end of RNA via an enzyme-GMP covalent reaction intermediate. This chain is mRNA-capping enzyme subunit alpha (rnp-2), found in Neurospora crassa (strain ATCC 24698 / 74-OR23-1A / CBS 708.71 / DSM 1257 / FGSC 987).